The primary structure comprises 83 residues: MSDSPSLSPPAPSQGPTTPRKGPPKFKQRQTRQFKSKPPKKGVKGFGDDIPGMEGLGTDITVICPWEAFSHLELHELAQFGII.

The tract at residues methionine 1–glutamate 54 is disordered. Residues glycine 22–valine 43 are compositionally biased toward basic residues.

The protein belongs to the rod/cone cGMP-PDE gamma subunit family. Tetramer composed of two catalytic chains (alpha and beta), and two inhibitory chains (gamma).

The catalysed reaction is 3',5'-cyclic GMP + H2O = GMP + H(+). Its function is as follows. Participates in processes of transmission and amplification of the visual signal. cGMP-PDEs are the effector molecules in G-protein-mediated phototransduction in vertebrate rods and cones. The polypeptide is Retinal cone rhodopsin-sensitive cGMP 3',5'-cyclic phosphodiesterase subunit gamma (Pde6h) (Mus musculus (Mouse)).